Consider the following 208-residue polypeptide: Putative thymidylate kinase (208 aa).

A defective ATP-binding region spans residues 12-19; sequence GIDGTGTS.

Belongs to the thymidylate kinase family.

The catalysed reaction is dTMP + ATP = dTDP + ADP. In Treponema pallidum (strain Nichols), this protein is Putative thymidylate kinase (tmk).